A 392-amino-acid polypeptide reads, in one-letter code: Elongation factor Tu-3 (392 aa).

The tr-type G domain maps to 10–206; sequence KPHLNIGTMG…AVDTYVPMPE (197 aa). The segment at 19-26 is G1; the sequence is GHVDHGKT. 19–26 provides a ligand contact to GTP; the sequence is GHVDHGKT. Residue Thr-26 coordinates Mg(2+). Residues 63 to 67 are G2; that stretch reads GITIN. The interval 84-87 is G3; that stretch reads DMPG. GTP contacts are provided by residues 84 to 88 and 139 to 142; these read DMPGH and NKAD. Residues 139 to 142 form a G4 region; that stretch reads NKAD. Residues 176 to 178 are G5; it reads SGL.

This sequence belongs to the TRAFAC class translation factor GTPase superfamily. Classic translation factor GTPase family. EF-Tu/EF-1A subfamily. As to quaternary structure, monomer.

It is found in the cytoplasm. It carries out the reaction GTP + H2O = GDP + phosphate + H(+). In terms of biological role, GTP hydrolase that promotes the GTP-dependent binding of aminoacyl-tRNA to the A-site of ribosomes during protein biosynthesis. The chain is Elongation factor Tu-3 from Streptomyces coelicolor (strain ATCC BAA-471 / A3(2) / M145).